Here is a 204-residue protein sequence, read N- to C-terminus: Thymidylate kinase (204 aa).

7–14 (GGEGVGKT) serves as a coordination point for ATP.

The protein belongs to the thymidylate kinase family.

It carries out the reaction dTMP + ATP = dTDP + ADP. Phosphorylation of dTMP to form dTDP in both de novo and salvage pathways of dTTP synthesis. The chain is Thymidylate kinase from Synechococcus sp. (strain JA-3-3Ab) (Cyanobacteria bacterium Yellowstone A-Prime).